The following is a 75-amino-acid chain: Large ribosomal subunit protein bL31 (75 aa).

Zn(2+)-binding residues include C16, C18, C37, and C40.

Belongs to the bacterial ribosomal protein bL31 family. Type A subfamily. Part of the 50S ribosomal subunit. It depends on Zn(2+) as a cofactor.

Its function is as follows. Binds the 23S rRNA. The polypeptide is Large ribosomal subunit protein bL31 (Baumannia cicadellinicola subsp. Homalodisca coagulata).